We begin with the raw amino-acid sequence, 456 residues long: Adenylosuccinate lyase (456 aa).

N(6)-(1,2-dicarboxyethyl)-AMP-binding positions include 15 to 16 (RY), 90 to 92 (NHD), and 122 to 123 (TS). Histidine 171 serves as the catalytic Proton donor/acceptor. Glutamine 247 contributes to the N(6)-(1,2-dicarboxyethyl)-AMP binding site. Serine 295 acts as the Proton donor/acceptor in catalysis. N(6)-(1,2-dicarboxyethyl)-AMP-binding positions include serine 296, 301 to 303 (KVN), asparagine 309, arginine 335, and 340 to 344 (STVLR).

Belongs to the lyase 1 family. Adenylosuccinate lyase subfamily. As to quaternary structure, homotetramer. Residues from neighboring subunits contribute catalytic and substrate-binding residues to each active site.

It carries out the reaction N(6)-(1,2-dicarboxyethyl)-AMP = fumarate + AMP. It catalyses the reaction (2S)-2-[5-amino-1-(5-phospho-beta-D-ribosyl)imidazole-4-carboxamido]succinate = 5-amino-1-(5-phospho-beta-D-ribosyl)imidazole-4-carboxamide + fumarate. Its pathway is purine metabolism; AMP biosynthesis via de novo pathway; AMP from IMP: step 2/2. It functions in the pathway purine metabolism; IMP biosynthesis via de novo pathway; 5-amino-1-(5-phospho-D-ribosyl)imidazole-4-carboxamide from 5-amino-1-(5-phospho-D-ribosyl)imidazole-4-carboxylate: step 2/2. Functionally, catalyzes two reactions in de novo purine nucleotide biosynthesis. Catalyzes the breakdown of 5-aminoimidazole- (N-succinylocarboxamide) ribotide (SAICAR or 2-[5-amino-1-(5-phospho-beta-D-ribosyl)imidazole-4-carboxamido]succinate) to 5-aminoimidazole-4-carboxamide ribotide (AICAR or 5-amino-1-(5-phospho-beta-D-ribosyl)imidazole-4-carboxamide) and fumarate, and of adenylosuccinate (ADS or N(6)-(1,2-dicarboxyethyl)-AMP) to adenosine monophosphate (AMP) and fumarate. The sequence is that of Adenylosuccinate lyase (purB) from Buchnera aphidicola subsp. Acyrthosiphon pisum (strain APS) (Acyrthosiphon pisum symbiotic bacterium).